We begin with the raw amino-acid sequence, 255 residues long: 5'-nucleotidase SurE (255 aa).

A divalent metal cation is bound by residues aspartate 8, aspartate 9, serine 39, and asparagine 91.

It belongs to the SurE nucleotidase family. Requires a divalent metal cation as cofactor.

It is found in the cytoplasm. The enzyme catalyses a ribonucleoside 5'-phosphate + H2O = a ribonucleoside + phosphate. Its function is as follows. Nucleotidase that shows phosphatase activity on nucleoside 5'-monophosphates. The chain is 5'-nucleotidase SurE from Acinetobacter baylyi (strain ATCC 33305 / BD413 / ADP1).